We begin with the raw amino-acid sequence, 366 residues long: uncharacterized protein (366 aa).

The CP-type G domain maps to 59–222 (LNILHGIGET…LYDTPGIINN (164 aa)).

This sequence belongs to the TRAFAC class YlqF/YawG GTPase family.

Binds GTP and GDP. This is an uncharacterized protein from Bacillus subtilis (strain 168).